The sequence spans 623 residues: Leucine aminopeptidase 2 (623 aa).

Residues 136–138 and 273–278 contribute to the a peptide site; these read QCQ and PYGGME. Histidine 302 lines the Zn(2+) pocket. The active-site Proton acceptor is glutamate 303. The Zn(2+) site is built by histidine 306 and glutamate 325. The Proton donor role is filled by tyrosine 390.

Belongs to the peptidase M1 family. It depends on Zn(2+) as a cofactor.

It localises to the cytoplasm. The protein localises to the nucleus. It catalyses the reaction an epoxide + H2O = an ethanediol. Functionally, aminopeptidase that preferentially cleaves di- and tripeptides. Also has low epoxide hydrolase activity (in vitro). Can hydrolyze the epoxide leukotriene LTA(4) but it forms preferentially 5,6-dihydroxy-7,9,11,14-eicosatetraenoic acid rather than the cytokine leukotriene B(4) as the product compared to the homologous mammalian enzyme (in vitro). This is Leucine aminopeptidase 2 from Phaeosphaeria nodorum (strain SN15 / ATCC MYA-4574 / FGSC 10173) (Glume blotch fungus).